The chain runs to 427 residues: 3-phosphoshikimate 1-carboxyvinyltransferase (427 aa).

3-phosphoshikimate is bound by residues Lys20, Ser21, and Arg25. Lys20 contributes to the phosphoenolpyruvate binding site. The phosphoenolpyruvate site is built by Gly92 and Arg120. 3-phosphoshikimate is bound by residues Ser166, Gln168, Asp312, and Lys339. Gln168 is a phosphoenolpyruvate binding site. Asp312 functions as the Proton acceptor in the catalytic mechanism. Phosphoenolpyruvate-binding residues include Arg343 and Arg385.

This sequence belongs to the EPSP synthase family. In terms of assembly, monomer.

It localises to the cytoplasm. It carries out the reaction 3-phosphoshikimate + phosphoenolpyruvate = 5-O-(1-carboxyvinyl)-3-phosphoshikimate + phosphate. It functions in the pathway metabolic intermediate biosynthesis; chorismate biosynthesis; chorismate from D-erythrose 4-phosphate and phosphoenolpyruvate: step 6/7. Catalyzes the transfer of the enolpyruvyl moiety of phosphoenolpyruvate (PEP) to the 5-hydroxyl of shikimate-3-phosphate (S3P) to produce enolpyruvyl shikimate-3-phosphate and inorganic phosphate. The chain is 3-phosphoshikimate 1-carboxyvinyltransferase from Streptococcus agalactiae serotype Ia (strain ATCC 27591 / A909 / CDC SS700).